A 496-amino-acid polypeptide reads, in one-letter code: Cobyric acid synthase (496 aa).

The GATase cobBQ-type domain maps to 255–445 (DLEIAVLKLP…LHGLLDNGPW (191 aa)). Cysteine 336 functions as the Nucleophile in the catalytic mechanism. Histidine 437 is an active-site residue.

This sequence belongs to the CobB/CobQ family. CobQ subfamily.

It functions in the pathway cofactor biosynthesis; adenosylcobalamin biosynthesis. Catalyzes amidations at positions B, D, E, and G on adenosylcobyrinic A,C-diamide. NH(2) groups are provided by glutamine, and one molecule of ATP is hydrogenolyzed for each amidation. The chain is Cobyric acid synthase from Parasynechococcus marenigrum (strain WH8102).